The primary structure comprises 118 residues: Large ribosomal subunit protein uL18 (118 aa).

The disordered stretch occupies residues 1 to 20; it reads MISKPDKNKKRQRRHARVRS. A compositionally biased stretch (basic residues) spans 7–20; sequence KNKKRQRRHARVRS.

It belongs to the universal ribosomal protein uL18 family. As to quaternary structure, part of the 50S ribosomal subunit; part of the 5S rRNA/L5/L18/L25 subcomplex. Contacts the 5S and 23S rRNAs.

This is one of the proteins that bind and probably mediate the attachment of the 5S RNA into the large ribosomal subunit, where it forms part of the central protuberance. In Pediococcus pentosaceus (strain ATCC 25745 / CCUG 21536 / LMG 10740 / 183-1w), this protein is Large ribosomal subunit protein uL18.